Consider the following 1358-residue polypeptide: Protein STU1 (1358 aa).

Disordered regions lie at residues 915-950 (FVAD…SHGF) and 970-990 (QPET…DESN). Over residues 926 to 949 (DDTKKNGSDVVDHEEIRDHEESHG) the composition is skewed to basic and acidic residues. Positions 973-990 (TVDENVDPMEVDSPDESN) are enriched in acidic residues.

It belongs to the CLASP family. Interacts with microtubules.

It is found in the cytoplasm. Its subcellular location is the cytoskeleton. The protein localises to the nucleus. It localises to the spindle. Functionally, microtubule binding protein that promotes the stabilization of dynamic microtubules. Required for mitotic spindle formation. The protein is Protein STU1 (STU1) of Kluyveromyces lactis (strain ATCC 8585 / CBS 2359 / DSM 70799 / NBRC 1267 / NRRL Y-1140 / WM37) (Yeast).